Here is a 353-residue protein sequence, read N- to C-terminus: UPF0421 protein YgaE (353 aa).

4 consecutive transmembrane segments (helical) span residues 20 to 40, 67 to 87, 103 to 123, and 125 to 145; these read LASW…IFAI, VFGL…VIVI, LVTV…FALI, and TSTV…FLPP.

Belongs to the UPF0421 family.

It is found in the cell membrane. This Bacillus subtilis (strain 168) protein is UPF0421 protein YgaE (ygaE).